Reading from the N-terminus, the 505-residue chain is Glutamate--tRNA ligase (505 aa).

A 'HIGH' region motif is present at residues 12 to 22 (PSPTGDPHVGT). The 'KMSKS' region motif lies at 253-257 (KLSKR). Lys256 lines the ATP pocket.

The protein belongs to the class-I aminoacyl-tRNA synthetase family. Glutamate--tRNA ligase type 1 subfamily. As to quaternary structure, monomer.

The protein resides in the cytoplasm. The enzyme catalyses tRNA(Glu) + L-glutamate + ATP = L-glutamyl-tRNA(Glu) + AMP + diphosphate. Its function is as follows. Catalyzes the attachment of glutamate to tRNA(Glu) in a two-step reaction: glutamate is first activated by ATP to form Glu-AMP and then transferred to the acceptor end of tRNA(Glu). The protein is Glutamate--tRNA ligase of Chlamydophila psittaci (strain ATCC VR-125 / 6BC) (Chlamydia psittaci).